A 93-amino-acid polypeptide reads, in one-letter code: Acylphosphatase (93 aa).

The cysteines at positions 5 and 49 are disulfide-linked. The Acylphosphatase-like domain maps to 5-93 (CTIAWIYGRV…ETLTDFSIRY (89 aa)). Catalysis depends on residues arginine 20 and asparagine 38.

Belongs to the acylphosphatase family.

It carries out the reaction an acyl phosphate + H2O = a carboxylate + phosphate + H(+). This chain is Acylphosphatase, found in Salmonella arizonae (strain ATCC BAA-731 / CDC346-86 / RSK2980).